The sequence spans 200 residues: Ankyrin repeat-containing protein YAR1 (200 aa).

ANK repeat units follow at residues 49–78 (SDST…RANS) and 92–121 (TGNT…ADPF). Residue S78 is modified to Phosphoserine. The disordered stretch occupies residues 152–173 (VEPEDDEEDTQTEGKNSVQITK). Over residues 153 to 162 (EPEDDEEDTQ) the composition is skewed to acidic residues. Residues 164–173 (EGKNSVQITK) are compositionally biased toward polar residues.

Required for normal rate of cell proliferation. The protein is Ankyrin repeat-containing protein YAR1 (YAR1) of Saccharomyces cerevisiae (strain ATCC 204508 / S288c) (Baker's yeast).